The chain runs to 154 residues: 3-hydroxyacyl-[acyl-carrier-protein] dehydratase FabZ (154 aa).

Residue H60 is part of the active site.

Belongs to the thioester dehydratase family. FabZ subfamily.

The protein resides in the cytoplasm. It carries out the reaction a (3R)-hydroxyacyl-[ACP] = a (2E)-enoyl-[ACP] + H2O. Involved in unsaturated fatty acids biosynthesis. Catalyzes the dehydration of short chain beta-hydroxyacyl-ACPs and long chain saturated and unsaturated beta-hydroxyacyl-ACPs. The polypeptide is 3-hydroxyacyl-[acyl-carrier-protein] dehydratase FabZ (Haemophilus ducreyi (strain 35000HP / ATCC 700724)).